A 750-amino-acid polypeptide reads, in one-letter code: Sulfhydryl oxidase 1 (750 aa).

A signal peptide spans 1–32 (MGRCNRGSGPPSSLLLLLLLLLWLLAVPGASA). Residues 39–159 (YSPSDPLTLL…RERLIDALES (121 aa)) form the Thioredoxin domain. Active-site nucleophile residues include C73 and C76. 2 disulfide bridges follow: C73-C76 and C104-C113. N-linked (GlcNAc...) asparagine glycans are attached at residues N133 and N246. C396 and C408 are disulfide-bonded. Residues 399–506 (SEPHFRGFPC…EDPQFPKVQW (108 aa)) enclose the ERV/ALR sulfhydryl oxidase domain. Residues R404, W411, and H415 each contribute to the FAD site. Position 429 is a phosphoserine (S429). A disulfide bond links C452 and C455. FAD contacts are provided by residues D454, H458, 481–488 (WSSHNRVN), K503, and W506. The cysteines at positions 512 and 515 are disulfide-linked. N578 carries an N-linked (GlcNAc...) asparagine glycan. A disordered region spans residues 578–645 (NSTVDLGKPE…REQPRGQWHL (68 aa)). Residues 624–639 (PPEHMAELQTNEREQP) show a composition bias toward basic and acidic residues. A helical transmembrane segment spans residues 713-733 (ISLCVGLYSLSFMGLLAMYAY).

It belongs to the quiescin-sulfhydryl oxidase (QSOX) family. Monomer. FAD is required as a cofactor. N-glycosylated. O-glycosylated on Thr and Ser residues.

It localises to the golgi apparatus membrane. It is found in the secreted. The enzyme catalyses 2 R'C(R)SH + O2 = R'C(R)S-S(R)CR' + H2O2. In terms of biological role, catalyzes the oxidation of sulfhydryl groups in peptide and protein thiols to disulfides with the reduction of oxygen to hydrogen peroxide. Plays a role in disulfide bond formation in a variety of extracellular proteins. In fibroblasts, required for normal incorporation of laminin into the extracellular matrix, and thereby for normal cell-cell adhesion and cell migration. This chain is Sulfhydryl oxidase 1 (QSOX1), found in Pongo abelii (Sumatran orangutan).